The following is a 143-amino-acid chain: Hemoglobin cathodic subunit alpha (143 aa).

Serine 2 carries the post-translational modification N-acetylserine. Residues 2–143 (SLTAKDKSLI…LGAALSDKYR (142 aa)) form the Globin domain. Histidine 60 contributes to the O2 binding site. Histidine 89 is a heme b binding site.

It belongs to the globin family. As to quaternary structure, heterotetramer of two alpha chains and two beta chains. Red blood cells.

In terms of biological role, involved in oxygen transport from gills to the various peripheral tissues. The chain is Hemoglobin cathodic subunit alpha from Anguilla anguilla (European freshwater eel).